Consider the following 484-residue polypeptide: Glutamyl-tRNA(Gln) amidotransferase subunit A (484 aa).

Catalysis depends on charge relay system residues Lys-78 and Ser-153. The active-site Acyl-ester intermediate is the Ser-177.

Belongs to the amidase family. GatA subfamily. As to quaternary structure, heterotrimer of A, B and C subunits.

It carries out the reaction L-glutamyl-tRNA(Gln) + L-glutamine + ATP + H2O = L-glutaminyl-tRNA(Gln) + L-glutamate + ADP + phosphate + H(+). Allows the formation of correctly charged Gln-tRNA(Gln) through the transamidation of misacylated Glu-tRNA(Gln) in organisms which lack glutaminyl-tRNA synthetase. The reaction takes place in the presence of glutamine and ATP through an activated gamma-phospho-Glu-tRNA(Gln). This Thermodesulfovibrio yellowstonii (strain ATCC 51303 / DSM 11347 / YP87) protein is Glutamyl-tRNA(Gln) amidotransferase subunit A.